We begin with the raw amino-acid sequence, 176 residues long: Ferritin, middle subunit (176 aa).

The Ferritin-like diiron domain occupies 7–156 (QNYHRDCEAA…DFITNLSRMD (150 aa)). Positions 24, 59, 62, 104, and 138 each coordinate Fe cation.

This sequence belongs to the ferritin family. In terms of assembly, in liver, forms a heteromer consisting of middle and heavy subunits. In spleen, forms a homomer. The functional molecule forms a roughly spherical shell with a diameter of 12 nm and contains a central cavity into which the insoluble mineral iron core is deposited. In terms of tissue distribution, liver and spleen (at protein level).

The catalysed reaction is 4 Fe(2+) + O2 + 4 H(+) = 4 Fe(3+) + 2 H2O. In terms of biological role, stores iron in a soluble, non-toxic, readily available form. Important for iron homeostasis. Has ferroxidase activity. Iron is taken up in the ferrous form and deposited as ferric hydroxides after oxidation. The protein is Ferritin, middle subunit of Trematomus newnesi (Dusky notothen).